The following is a 360-amino-acid chain: Probable CCR4-associated factor 1 homolog 1 (360 aa).

A divalent metal cation-binding residues include Asp-37, Glu-39, Asp-155, and Asp-226.

This sequence belongs to the CAF1 family. Component of the CCR4-NOT complex, at least composed of CRR4 and CAF1 proteins. A divalent metal cation serves as cofactor.

Its subcellular location is the nucleus. The protein localises to the cytoplasm. It catalyses the reaction Exonucleolytic cleavage of poly(A) to 5'-AMP.. In terms of biological role, ubiquitous transcription factor required for a diverse set of processes. It is a component of the CCR4 complex involved in the control of gene expression. The sequence is that of Probable CCR4-associated factor 1 homolog 1 (CAF1-1) from Arabidopsis thaliana (Mouse-ear cress).